A 334-amino-acid polypeptide reads, in one-letter code: Heat shock factor 2-binding protein (334 aa).

The interaction with BRME1 stretch occupies residues 14 to 51 (MGTKEEFVKVRKKDLERLTTEVMQIRDFLPRILNGEVL). Positions 49–122 (EVLESFQKLK…LLQQAEYCTE (74 aa)) form a coiled coil. The interaction with BRCA2 stretch occupies residues 83 to 334 (ARLETVQADN…EDLRTLEHNV (252 aa)).

In terms of assembly, associates with HSF2. The interaction seems to occur between the trimerization domain of HSF2 and the N-terminal hydrophilic region of HSF2BP. Interacts (via C-terminus) with BNC1. Interacts (via N-terminus) with BRCA2 and BRME1; the interactions are direct and allow the formation of a ternary complex. The complex BRME1:HSF2BP:BRCA2 interacts with SPATA22, MEIOB and RAD51. In terms of processing, sumoylated by UBE2I in response to MEKK1-mediated stimuli. In terms of tissue distribution, testis specific. Overexpressed in some tumors.

It localises to the cytoplasm. It is found in the chromosome. Functionally, meiotic recombination factor component of recombination bridges involved in meiotic double-strand break repair. Modulates the localization of recombinases DMC1:RAD51 to meiotic double-strand break (DSB) sites through the interaction with BRCA2 and its recruitment during meiotic recombination. Indispensable for the DSB repair, homologous synapsis, and crossover formation that are needed for progression past metaphase I, is essential for spermatogenesis and male fertility. Required for proper recombinase recruitment in female meiosis. Inhibits BNC1 transcriptional activity during spermatogenesis, probably by sequestering it in the cytoplasm. May be involved in modulating HSF2 activation in testis. This Homo sapiens (Human) protein is Heat shock factor 2-binding protein.